The primary structure comprises 473 residues: UDP-glycosyltransferase 91D2 (473 aa).

Catalysis depends on histidine 26, which acts as the Proton acceptor. Position 26 (histidine 26) interacts with an anthocyanidin. The active-site Charge relay is the aspartate 121. Positions 344, 346, 361, 366, and 369 each coordinate UDP-alpha-D-glucose. An anthocyanidin is bound at residue glycine 384. The UDP-alpha-D-glucose site is built by aspartate 385 and glutamine 386.

This sequence belongs to the UDP-glycosyltransferase family.

The enzyme catalyses steviolmonoside + UDP-alpha-D-glucose = steviolbioside + UDP + H(+). The catalysed reaction is rubusoside + UDP-alpha-D-glucose = stevioside + UDP + H(+). It catalyses the reaction stevioside + UDP-alpha-D-glucose = rebaudioside E + UDP + H(+). It carries out the reaction rebaudioside A + UDP-alpha-D-glucose = rebaudioside D + UDP + H(+). Involved in the biosynthesis of steviol glycosides in leaves. Converts the mono-glycoside steviolmonoside to the bi-glycoside steviolbioside. Converts the bi-glycoside rubusoside to the tri-glycoside stevioside. Converts the tri-glycoside stevioside to the tetra-glycoside rebaudioside E. Converts the tetra-glycoside rebaudioside A to the penta-glycoside rebaudioside E. The sequence is that of UDP-glycosyltransferase 91D2 from Stevia rebaudiana (Stevia).